The sequence spans 395 residues: Dihydroorotate dehydrogenase (quinone), mitochondrial (395 aa).

A mitochondrion; not cleaved-targeting transit peptide spans 1-10 (MAWRHLKKRA). Residues 1–10 (MAWRHLKKRA) are Mitochondrial matrix-facing. A helical membrane pass occupies residues 11 to 30 (QDAVIILGGGGLLFASYLMA). Over 31–395 (TGDERFYAEH…TDAIGADHRR (365 aa)) the chain is Mitochondrial intermembrane. FMN contacts are provided by residues 95–99 (AGFDK) and serine 119. Lysine 99 lines the substrate pocket. 144–148 (NRYGF) contacts substrate. FMN contacts are provided by asparagine 180 and asparagine 211. Substrate is bound at residue 211-216 (NVSSPN). Residue serine 214 is the Nucleophile of the active site. Residues lysine 254 and threonine 282 each coordinate FMN. 283–284 (NT) contributes to the substrate binding site. Residues glycine 305, glycine 334, and 355-356 (YT) contribute to the FMN site.

It belongs to the dihydroorotate dehydrogenase family. Type 2 subfamily. As to quaternary structure, monomer. FMN serves as cofactor. In terms of processing, the uncleaved transit peptide is required for mitochondrial targeting and proper membrane integration.

It localises to the mitochondrion inner membrane. The enzyme catalyses (S)-dihydroorotate + a quinone = orotate + a quinol. Its pathway is pyrimidine metabolism; UMP biosynthesis via de novo pathway; orotate from (S)-dihydroorotate (quinone route): step 1/1. Catalyzes the conversion of dihydroorotate to orotate with quinone as electron acceptor. Required for UMP biosynthesis via de novo pathway. This is Dihydroorotate dehydrogenase (quinone), mitochondrial (DHODH) from Homo sapiens (Human).